A 242-amino-acid polypeptide reads, in one-letter code: Large ribosomal subunit protein uL30x (242 aa).

It belongs to the universal ribosomal protein uL30 family.

This chain is Large ribosomal subunit protein uL30x (RPL7C), found in Arabidopsis thaliana (Mouse-ear cress).